The chain runs to 210 residues: Ribosomal RNA small subunit methyltransferase G (210 aa).

Residues L78, 124 to 125 (IE), and R138 contribute to the S-adenosyl-L-methionine site.

The protein belongs to the methyltransferase superfamily. RNA methyltransferase RsmG family.

Its subcellular location is the cytoplasm. The enzyme catalyses guanosine(527) in 16S rRNA + S-adenosyl-L-methionine = N(7)-methylguanosine(527) in 16S rRNA + S-adenosyl-L-homocysteine. Its function is as follows. Specifically methylates the N7 position of guanine in position 527 of 16S rRNA. The polypeptide is Ribosomal RNA small subunit methyltransferase G (Bordetella bronchiseptica (strain ATCC BAA-588 / NCTC 13252 / RB50) (Alcaligenes bronchisepticus)).